A 113-amino-acid polypeptide reads, in one-letter code: Carboxysome shell protein CcmK4 (113 aa).

Residues 5–91 enclose the BMC domain; it reads AIGSLETKGF…PHENVEAVFP (87 aa).

This sequence belongs to the bacterial microcompartments protein family. CcmK subfamily. In terms of assembly, homohexamer. Interacts stably with CcmK3, probably forms heterohexamers with a 1:2 CcmK3:CcmK4 stoichiometry.

The protein localises to the carboxysome. In terms of biological role, one of the shell proteins of the carboxysome, a polyhedral inclusion where RuBisCO (ribulose bisphosphate carboxylase, rbcL-rbcS) is sequestered. Assembles into hexamers which make sheets that form the facets of the polyhedral carboxysome. The hexamer central pore probably regulates metabolite flux. Its function is as follows. A minor shell protein of the carboxysome, a polyhedral inclusion where RuBisCO (ribulose bisphosphate carboxylase, rbcL-rbcS) is sequestered. Hexamers form sheets that form the facets of the polyhedral carboxysome. The shell is 4.5 nm thick, as observed for CcmK proteins. In PCC 7942 there are several CcmK paralogs with presumably functional differences; replacing the central pore residues (34-37) with those of CcmK2 from this organism (Tyr-Glu-Lys-Ile) allows the bacterium to make carboxysomes, but the expression level is too low to know if the carboxysome is functional for CO(2) fixation. This subunit probably makes both homohexamers and heterohexamers with CcmK3. The CcmK3-CcmK4 heterohexmers have been suggested to cap other hexamers, perhaps to alter metabolite flux. The polypeptide is Carboxysome shell protein CcmK4 (Synechococcus elongatus (strain ATCC 33912 / PCC 7942 / FACHB-805) (Anacystis nidulans R2)).